The sequence spans 231 residues: 2-C-methyl-D-erythritol 4-phosphate cytidylyltransferase (231 aa).

It belongs to the IspD/TarI cytidylyltransferase family. IspD subfamily.

It catalyses the reaction 2-C-methyl-D-erythritol 4-phosphate + CTP + H(+) = 4-CDP-2-C-methyl-D-erythritol + diphosphate. Its pathway is isoprenoid biosynthesis; isopentenyl diphosphate biosynthesis via DXP pathway; isopentenyl diphosphate from 1-deoxy-D-xylulose 5-phosphate: step 2/6. In terms of biological role, catalyzes the formation of 4-diphosphocytidyl-2-C-methyl-D-erythritol from CTP and 2-C-methyl-D-erythritol 4-phosphate (MEP). The chain is 2-C-methyl-D-erythritol 4-phosphate cytidylyltransferase from Clostridium novyi (strain NT).